Reading from the N-terminus, the 246-residue chain is 14-3-3 protein beta/alpha (246 aa).

At methionine 1 the chain carries N-acetylmethionine. An N-acetylthreonine; in 14-3-3 protein beta/alpha, N-terminally processed modification is found at threonine 2. A Phosphothreonine modification is found at threonine 2. N6-acetyllysine is present on lysine 5. Residue lysine 51 is modified to N6-acetyllysine; alternate. Residue lysine 51 forms a Glycyl lysine isopeptide (Lys-Gly) (interchain with G-Cter in SUMO2); alternate linkage. Serine 60 is modified (phosphoserine). Lysine 70 is subject to N6-acetyllysine. Residues tyrosine 84 and tyrosine 106 each carry the 3'-nitrotyrosine modification. The residue at position 117 (lysine 117) is an N6-acetyllysine. Serine 186 and serine 232 each carry phosphoserine.

Belongs to the 14-3-3 family. As to quaternary structure, homodimer. Interacts with SAMSN1 and PRKCE. Interacts with AKAP13. Interacts with SSH1 and TORC2/CRTC2. Interacts with ABL1; the interaction results in cytoplasmic location of ABL1 and inhibition of cABL-mediated apoptosis. Interacts with ROR2 (dimer); the interaction results in phosphorylation of YWHAB on tyrosine residues. Interacts with GAB2. Interacts with YAP1 (phosphorylated form). Interacts with the phosphorylated (by AKT1) form of SRPK2. Interacts with PKA-phosphorylated AANAT. Interacts with MYO1C. Interacts with SIRT2. Interacts with the 'Thr-369' phosphorylated form of DAPK2. Interacts with PI4KB, TBC1D22A and TBC1D22B. Interacts with the 'Ser-1134' and 'Ser-1161' phosphorylated form of SOS1. Interacts (via phosphorylated form) with YWHAB; this interaction occurs in a protein kinase AKT1-dependent manner. Interacts with SLITRK1. Interacts with SYNPO2 (phosphorylated form); YWHAB competes with ACTN2 for interaction with SYNPO2. Interacts with RIPOR2 (via phosphorylated form); this interaction occurs in a chemokine-dependent manner and does not compete for binding of RIPOR2 with RHOA nor blocks inhibition of RIPOR2-mediated RHOA activity. Interacts with MARK2 and MARK3. Interacts with TESK1; the interaction is dependent on the phosphorylation of TESK1 'Ser-439' and inhibits TESK1 kinase activity. Interacts with MEFV. Interacts with HDAC4. Interacts with ADAM22 (via C-terminus). In terms of processing, isoform alpha differs from isoform beta in being phosphorylated. Phosphorylated on Ser-60 by protein kinase C delta type catalytic subunit in a sphingosine-dependent fashion. Post-translationally, isoform Short contains a N-acetylmethionine at position 1.

Its subcellular location is the cytoplasm. The protein resides in the melanosome. Functionally, adapter protein implicated in the regulation of a large spectrum of both general and specialized signaling pathways. Binds to a large number of partners, usually by recognition of a phosphoserine or phosphothreonine motif. Binding generally results in the modulation of the activity of the binding partner. Negative regulator of osteogenesis. Blocks the nuclear translocation of the phosphorylated form (by AKT1) of SRPK2 and antagonizes its stimulatory effect on cyclin D1 expression resulting in blockage of neuronal apoptosis elicited by SRPK2. Negative regulator of signaling cascades that mediate activation of MAP kinases via AKAP13. In Mus musculus (Mouse), this protein is 14-3-3 protein beta/alpha (Ywhab).